A 275-amino-acid chain; its full sequence is MNRIQSVFSQLKSQNRAALIPFITAGDPDATTTVALMHRLTQAGVDLIELGVPFSDPMADGPTIQRSSERALKHHISLKDVFSMVAEFRKTNQSTPVVLMGYANPIEAMGYKDFVQTAGHAGVDGVLVVDYPPEECTEWVRYLKEQNIDPIFLLSPTTPESRIRRVAELARGYVYYVSLKGVTGASHLDLHEVGDKLSQLRSYINIPIGVGFGIRDEQTARRIAEQADAVVIGSRIVEEIEHSPAADLLANVGALVESLRRAIDAKSDHSSITEK.

Active-site proton acceptor residues include Glu49 and Asp60.

This sequence belongs to the TrpA family. As to quaternary structure, tetramer of two alpha and two beta chains.

The catalysed reaction is (1S,2R)-1-C-(indol-3-yl)glycerol 3-phosphate + L-serine = D-glyceraldehyde 3-phosphate + L-tryptophan + H2O. It participates in amino-acid biosynthesis; L-tryptophan biosynthesis; L-tryptophan from chorismate: step 5/5. The alpha subunit is responsible for the aldol cleavage of indoleglycerol phosphate to indole and glyceraldehyde 3-phosphate. This chain is Tryptophan synthase alpha chain, found in Nitrosomonas europaea (strain ATCC 19718 / CIP 103999 / KCTC 2705 / NBRC 14298).